We begin with the raw amino-acid sequence, 485 residues long: Forkhead box protein N3 (485 aa).

2 disordered regions span residues 1 to 54 (MGPV…KGGM) and 85 to 108 (PVQDIDDDTPPSPAQSDMPYDAKQ). The segment covering 16–30 (ISVSSQCYRSSTLSN) has biased composition (polar residues). Positions 113-209 (KPPYSFSCLI…QALKKTPYHP (97 aa)) form a DNA-binding region, fork-head. Disordered regions lie at residues 316-357 (MESE…ISSS) and 401-449 (PLVE…MKEA). Over residues 338-357 (SSAKSANKRSSSPSDSISSS) the composition is skewed to low complexity. A compositionally biased stretch (basic residues) spans 410–422 (QHKKKQHLLKLRR).

At early cleavage stages, localized within the animal half of the embryo. At gastrulation, expression expands over the whole embryo excluding the future endodermal cells of the blastopore. During neurulation, expressed in the prospective eye field and in the neural crest cells. Strongly enriched in the eye vesicles at stage 26. From stage 29 onwards, expressed predominantly in the eye, the branchial arches and the vagal ganglion. At stage 38, expressed throughout the head with strongest expression in the head mesenchyme and the eye lens.

It localises to the nucleus. In terms of biological role, acts as a transcriptional repressor. May be involved in DNA damage-inducible cell cycle arrests (checkpoints). In Xenopus laevis (African clawed frog), this protein is Forkhead box protein N3.